A 544-amino-acid polypeptide reads, in one-letter code: MTQYISKYSPIDFGEYGYDKSFPYCYNGTCKNFSKLMWLVINEKSNPRIDGHKKIVKHLKKNKRKINAQNEHGWTALMIASILSNDWSSIKTVKLLLKKGADPNIENYNYSQTVLKLAASNVKYASNIKTIKLLIHYGADINHKNLLGVSVLHYCYIDYYTKSDNLEVIKLLLSYGMDINSVTNQGNTLLYIVSKVSQNNNSTETVKFLLENNADPNIPNNKGTTALMVASKYSNSTSNLATVKLLLDYEANINFMNKYNETALSKVVSNFYESNYNKNNFMTLKFLIQKGAIDIPIGIDKLSILMVAVIRTYCSENSDNFTKLIELLLKHFNPNIQCSNGKTVLHYLCNKQVCNFPYVDVINLLLKAGINPNIKDNQGKTALILACDNYCFLKNKEAVRLLCKVSTINTIDNTGQSALDYFLNKYKEKYTNILTIILKYGAYCVNKNNINKIKILKCFDYLNKNNKINKIHEKICDQIKLKAIKHQIRPTSLRMKIISLNWYSRSYQTDKIISWNNLDAIDYLGAIDIDDLRYKISDCTKYID.

11 ANK repeats span residues 31 to 71, 72 to 105, 110 to 143, 147 to 181, 185 to 218, 222 to 255, 259 to 297, 300 to 339, 340 to 374, 378 to 413, and 414 to 447; these read KNFS…AQNE, HGWT…DPNI, YSQT…DINH, LGVS…DINS, QGNT…DPNI, KGTT…NINF, YNET…DIPI, DKLS…IQCS, NGKT…NPNI, QGKT…TIDN, and TGQS…CVNK.

The protein is Putative ankyrin repeat protein L289 of Acanthamoeba polyphaga mimivirus (APMV).